Here is a 62-residue protein sequence, read N- to C-terminus: Small ribosomal subunit protein bS21 (62 aa).

Residues 43–52 are compositionally biased toward basic and acidic residues; sequence VKKKLKSEAA. The interval 43-62 is disordered; the sequence is VKKKLKSEAARKRKNRRRFK. The span at 53–62 shows a compositional bias: basic residues; the sequence is RKRKNRRRFK.

This sequence belongs to the bacterial ribosomal protein bS21 family.

The sequence is that of Small ribosomal subunit protein bS21 from Lactiplantibacillus plantarum (strain ATCC BAA-793 / NCIMB 8826 / WCFS1) (Lactobacillus plantarum).